Reading from the N-terminus, the 142-residue chain is Large ribosomal subunit protein bL19 (142 aa).

It belongs to the bacterial ribosomal protein bL19 family.

This protein is located at the 30S-50S ribosomal subunit interface and may play a role in the structure and function of the aminoacyl-tRNA binding site. This is Large ribosomal subunit protein bL19 from Rickettsia bellii (strain OSU 85-389).